The primary structure comprises 181 residues: Adenine phosphoribosyltransferase (181 aa).

Belongs to the purine/pyrimidine phosphoribosyltransferase family. Homodimer.

Its subcellular location is the cytoplasm. It carries out the reaction AMP + diphosphate = 5-phospho-alpha-D-ribose 1-diphosphate + adenine. The protein operates within purine metabolism; AMP biosynthesis via salvage pathway; AMP from adenine: step 1/1. Its function is as follows. Catalyzes a salvage reaction resulting in the formation of AMP, that is energically less costly than de novo synthesis. The protein is Adenine phosphoribosyltransferase of Chromohalobacter salexigens (strain ATCC BAA-138 / DSM 3043 / CIP 106854 / NCIMB 13768 / 1H11).